The following is a 343-amino-acid chain: Cell cycle control protein 50C (343 aa).

Residues 1 to 34 are Cytoplasmic-facing; it reads MKRKCQDYESRLPDNTAVKQQQLPAFRLQLTASE. The helical transmembrane segment at 35–55 threads the bilayer; the sequence is ILSGFFAIGLFCLGMGIILLL. Over 56–306 the chain is Extracellular; that stretch reads SAKSIKEVEI…STLTWSGGSS (251 aa). Residues N66, N164, N205, and N265 are each glycosylated (N-linked (GlcNAc...) asparagine). A helical transmembrane segment spans residues 307–327; it reads LFLALAYLVTGAVTLLASFSM. Residues 328–343 lie on the Cytoplasmic side of the membrane; sequence MALHLKLKERKTFFLQ.

It belongs to the CDC50/LEM3 family.

The protein localises to the membrane. The polypeptide is Cell cycle control protein 50C (TMEM30C) (Bos taurus (Bovine)).